The sequence spans 156 residues: Putative NrdI-like protein (156 aa).

It belongs to the NrdI family.

This chain is Putative NrdI-like protein, found in Streptococcus pneumoniae serotype 4 (strain ATCC BAA-334 / TIGR4).